A 91-amino-acid chain; its full sequence is MDIKLINIGFGNIVSASRIVAIVSPESAPIKRIIQEARDRGMLIDATYGRRTRAVIITDSDHVILSAVQPETVAHRLSAKESVHHGDEATE.

This sequence belongs to the RemA family.

The chain is Putative regulatory protein Helmi_20580 from Heliobacterium modesticaldum (strain ATCC 51547 / Ice1).